The following is a 109-amino-acid chain: Nucleoid-associated protein CKO_02678 (109 aa).

The segment at 89–109 (KEKMASVSSGMQLPPGFKMPF) is disordered.

It belongs to the YbaB/EbfC family. In terms of assembly, homodimer.

It is found in the cytoplasm. It localises to the nucleoid. In terms of biological role, binds to DNA and alters its conformation. May be involved in regulation of gene expression, nucleoid organization and DNA protection. The sequence is that of Nucleoid-associated protein CKO_02678 from Citrobacter koseri (strain ATCC BAA-895 / CDC 4225-83 / SGSC4696).